Consider the following 476-residue polypeptide: UDP-N-acetylmuramate--L-alanine ligase (476 aa).

112–118 serves as a coordination point for ATP; the sequence is GTHGKTT.

Belongs to the MurCDEF family.

The protein resides in the cytoplasm. The enzyme catalyses UDP-N-acetyl-alpha-D-muramate + L-alanine + ATP = UDP-N-acetyl-alpha-D-muramoyl-L-alanine + ADP + phosphate + H(+). It participates in cell wall biogenesis; peptidoglycan biosynthesis. Cell wall formation. The sequence is that of UDP-N-acetylmuramate--L-alanine ligase from Magnetococcus marinus (strain ATCC BAA-1437 / JCM 17883 / MC-1).